A 307-amino-acid chain; its full sequence is tRNA pseudouridine synthase B (307 aa).

Asp38 acts as the Nucleophile in catalysis.

The protein belongs to the pseudouridine synthase TruB family. Type 1 subfamily.

The enzyme catalyses uridine(55) in tRNA = pseudouridine(55) in tRNA. Responsible for synthesis of pseudouridine from uracil-55 in the psi GC loop of transfer RNAs. The chain is tRNA pseudouridine synthase B from Bacillus cereus (strain ATCC 10987 / NRS 248).